The following is a 126-amino-acid chain: Fluoride-specific ion channel FluC (126 aa).

4 helical membrane passes run 6 to 26 (FLAV…LAIL), 36 to 56 (YGTL…VGFF), 69 to 89 (LVIT…GEVV), and 99 to 119 (IGVL…MLGF). The Na(+) site is built by glycine 76 and threonine 79.

It belongs to the fluoride channel Fluc/FEX (TC 1.A.43) family.

The protein localises to the cell inner membrane. The enzyme catalyses fluoride(in) = fluoride(out). Its activity is regulated as follows. Na(+) is not transported, but it plays an essential structural role and its presence is essential for fluoride channel function. In terms of biological role, fluoride-specific ion channel. Important for reducing fluoride concentration in the cell, thus reducing its toxicity. This chain is Fluoride-specific ion channel FluC, found in Ralstonia pickettii (strain 12J).